Here is a 137-residue protein sequence, read N- to C-terminus: Golgin subfamily A member 7 (137 aa).

2 S-palmitoyl cysteine lipidation sites follow: Cys-69 and Cys-72.

This sequence belongs to the ERF4 family. In terms of assembly, interacts with GOLGA3. Interacts with ZDHHC9. In terms of processing, palmitoylated on Cys-69 and Cys-72; which is required for Golgi localization and interaction with GOLGA3.

It is found in the golgi apparatus membrane. In terms of biological role, may be involved in protein transport from Golgi to cell surface. The ZDHHC9-GOLGA7 complex is a palmitoyltransferase specific for HRAS and NRAS. The protein is Golgin subfamily A member 7 (GOLGA7) of Bos taurus (Bovine).